Consider the following 210-residue polypeptide: T-cell surface glycoprotein CD8 beta chain (210 aa).

A signal peptide spans 1–21 (MRPRLWLLLAAQLAVLHGSSV). The Ig-like V-type domain maps to 22–132 (LQQTPAYIKV…ELTFGKGTQL (111 aa)). Residues 22–170 (LQQTPAYIKV…ETQKGPLCSP (149 aa)) are Extracellular-facing. A disulfide bond links Cys-41 and Cys-116. Asn-102 is a glycosylation site (N-linked (GlcNAc...) asparagine). A helical transmembrane segment spans residues 171-191 (ITLGLLVAGVLVLLVSLGVAI). At 192 to 210 (HLCCRRRRARLRFMKQFYK) the chain is on the cytoplasmic side.

Forms disulfide-linked heterodimers with CD8A at the cell surface. Interacts with CD3D; this interaction couples TCR-CD3 with CD8. Interacts with LCK. Post-translationally, phosphorylated as a consequence of T-cell activation. In terms of processing, palmitoylated at the cytoplasmic tail and thereby targets the heterodimer CD8A/CD8B to lipid rafts unlike CD8A homodimers.

Its subcellular location is the cell membrane. Integral membrane glycoprotein that plays an essential role in the immune response and serves multiple functions in responses against both external and internal offenses. In T-cells, functions primarily as a coreceptor for MHC class I molecule:peptide complex. The antigens presented by class I peptides are derived from cytosolic proteins while class II derived from extracellular proteins. Interacts simultaneously with the T-cell receptor (TCR) and the MHC class I proteins presented by antigen presenting cells (APCs). In turn, recruits the Src kinase LCK to the vicinity of the TCR-CD3 complex. A palmitoylation site in the cytoplasmic tail of CD8B chain contributes to partitioning of CD8 into the plasma membrane lipid rafts where signaling proteins are enriched. Once LCK recruited, it initiates different intracellular signaling pathways by phosphorylating various substrates ultimately leading to lymphokine production, motility, adhesion and activation of cytotoxic T-lymphocytes (CTLs). Additionally, plays a critical role in thymic selection of CD8+ T-cells. The polypeptide is T-cell surface glycoprotein CD8 beta chain (CD8B) (Pongo pygmaeus (Bornean orangutan)).